The following is a 661-amino-acid chain: Fructose-1,6-bisphosphatase class 3 (661 aa).

The protein belongs to the FBPase class 3 family. The cofactor is Mn(2+).

The catalysed reaction is beta-D-fructose 1,6-bisphosphate + H2O = beta-D-fructose 6-phosphate + phosphate. It functions in the pathway carbohydrate biosynthesis; gluconeogenesis. The protein is Fructose-1,6-bisphosphatase class 3 of Clostridioides difficile (strain 630) (Peptoclostridium difficile).